The primary structure comprises 307 residues: Homoserine O-acetyltransferase (307 aa).

Cysteine 142 acts as the Acyl-thioester intermediate in catalysis. Lysine 163 and serine 192 together coordinate substrate. Histidine 235 acts as the Proton acceptor in catalysis. Residue glutamate 237 is part of the active site. Arginine 249 is a binding site for substrate.

Belongs to the MetA family.

The protein localises to the cytoplasm. The catalysed reaction is L-homoserine + acetyl-CoA = O-acetyl-L-homoserine + CoA. It functions in the pathway amino-acid biosynthesis; L-methionine biosynthesis via de novo pathway; O-acetyl-L-homoserine from L-homoserine: step 1/1. Functionally, transfers an acetyl group from acetyl-CoA to L-homoserine, forming acetyl-L-homoserine. This is Homoserine O-acetyltransferase from Rhizobium leguminosarum bv. trifolii (strain WSM2304).